A 555-amino-acid polypeptide reads, in one-letter code: MRDYEGNGVDIDNNGASPYSQHISRDHENERDSSRSRDKERDKGRDKDRDRDRNRDRDRDRDRVKERDKDRHRDRDGEKDRDRHHRDRHRDRSDRRERERTRDRDEDDLHRSRDYDRRRDNDKDREDRRRHRPSSRGRSEHRSKSRSRSPSKSKRISGFDMAPPTTALLPGATDAAGQVPGTNPAIPGLFSNMFPLASSQFGALPMMPVQAMTQQATRHARRVYVGGLPPTANEQSVATFFSHVMYAIGGNTAGPGDAVVNVYINHEKKFAFVEMRSVEEASNAMALDGVIFEGGPVKVRRPSDYNPSLAATLGPSQPSPNLNLAAVGSTPGSSGGLEGPDRIFVGGLPYYFTESQIRELLESFGQLRGFDLVKDRETGNSKGYAFCVYQDVSVTDIACAALNGIKMGDKTLTVRRANQGTTQPNPEQESVLLHAQQQIALQRFMLQPGALATKVLCLTEVVTVDELNDDDDYQDILEDMRTECEKFGALVNVVIPRPNPNGVPTPGLGKVFLEYADVDGSSKARQGLNGRKFGGNQVVAVFYPENKFSEGDYEA.

Residues 1–165 (MRDYEGNGVD…ISGFDMAPPT (165 aa)) form a disordered region. Composition is skewed to basic and acidic residues over residues 23-81 (ISRD…EKDR) and 90-127 (RDRS…DRED). Over residues 143-155 (SKSRSRSPSKSKR) the composition is skewed to basic residues. 3 consecutive RRM domains span residues 221-304 (RRVY…RPSD), 341-419 (DRIF…RANQ), and 460-546 (EVVT…YPEN).

The protein belongs to the splicing factor SR family. As to expression, expressed in stems, leaves and apical buds.

Its subcellular location is the nucleus. Its function is as follows. Necessary for the splicing of pre-mRNA. Binds to the U -enriched regions of plant introns. This Nicotiana plumbaginifolia (Leadwort-leaved tobacco) protein is Splicing factor U2af large subunit A (U2AF65A).